Reading from the N-terminus, the 331-residue chain is D-alanine--D-alanine ligase (331 aa).

The region spanning 121–327 (KLWYDALGIP…FSQFLENCVR (207 aa)) is the ATP-grasp domain. 151 to 206 (AFESWGKVFVKAARQGSSVGCYQVNQVEELSEAINKAFTFSDQVLIEKSVVPRELE) contacts ATP. Mg(2+)-binding residues include Asp-281, Glu-294, and Asn-296.

The protein belongs to the D-alanine--D-alanine ligase family. The cofactor is Mg(2+). Requires Mn(2+) as cofactor.

It localises to the cytoplasm. It carries out the reaction 2 D-alanine + ATP = D-alanyl-D-alanine + ADP + phosphate + H(+). It functions in the pathway cell wall biogenesis; peptidoglycan biosynthesis. Functionally, cell wall formation. The sequence is that of D-alanine--D-alanine ligase from Vibrio atlanticus (strain LGP32) (Vibrio splendidus (strain Mel32)).